The following is a 140-amino-acid chain: Large ribosomal subunit protein bL17 (140 aa).

The protein belongs to the bacterial ribosomal protein bL17 family. In terms of assembly, part of the 50S ribosomal subunit. Contacts protein L32.

This Rhizobium leguminosarum bv. trifolii (strain WSM2304) protein is Large ribosomal subunit protein bL17.